Consider the following 233-residue polypeptide: Large ribosomal subunit protein uL1 (233 aa).

The protein belongs to the universal ribosomal protein uL1 family. Part of the 50S ribosomal subunit.

In terms of biological role, binds directly to 23S rRNA. The L1 stalk is quite mobile in the ribosome, and is involved in E site tRNA release. Its function is as follows. Protein L1 is also a translational repressor protein, it controls the translation of the L11 operon by binding to its mRNA. The sequence is that of Large ribosomal subunit protein uL1 from Thermotoga petrophila (strain ATCC BAA-488 / DSM 13995 / JCM 10881 / RKU-1).